The primary structure comprises 252 residues: Imidazole glycerol phosphate synthase subunit HisF (252 aa).

Catalysis depends on residues aspartate 12 and aspartate 131.

Belongs to the HisA/HisF family. Heterodimer of HisH and HisF.

The protein resides in the cytoplasm. The catalysed reaction is 5-[(5-phospho-1-deoxy-D-ribulos-1-ylimino)methylamino]-1-(5-phospho-beta-D-ribosyl)imidazole-4-carboxamide + L-glutamine = D-erythro-1-(imidazol-4-yl)glycerol 3-phosphate + 5-amino-1-(5-phospho-beta-D-ribosyl)imidazole-4-carboxamide + L-glutamate + H(+). The protein operates within amino-acid biosynthesis; L-histidine biosynthesis; L-histidine from 5-phospho-alpha-D-ribose 1-diphosphate: step 5/9. IGPS catalyzes the conversion of PRFAR and glutamine to IGP, AICAR and glutamate. The HisF subunit catalyzes the cyclization activity that produces IGP and AICAR from PRFAR using the ammonia provided by the HisH subunit. The polypeptide is Imidazole glycerol phosphate synthase subunit HisF (Thermus thermophilus (strain ATCC BAA-163 / DSM 7039 / HB27)).